Here is a 106-residue protein sequence, read N- to C-terminus: Antitoxin MazE3 (106 aa).

Forms a complex with cognate toxin MazF3, possibly with 1:1 stoichiometry.

Functionally, antitoxin component of a type II toxin-antitoxin (TA) system. Upon expression in E.coli and M.smegmatis neutralizes the effect of cognate toxin MazF3. Overexpression of MazE3 alone decreased persister cells formation in M.smegmatis upon challenge with gentamicin or kanamycin. The chain is Antitoxin MazE3 (mazE3) from Mycobacterium tuberculosis (strain ATCC 25618 / H37Rv).